The chain runs to 49 residues: uncharacterized protein (49 aa).

This is an uncharacterized protein from Bacillus subtilis (strain 168).